Reading from the N-terminus, the 456-residue chain is Dothistromin biosynthesis regulatory protein aflJ (456 aa).

The HTH iclR-type domain maps to Leu74–Gly143. Residues Tyr104 to Arg123 constitute a DNA-binding region (H-T-H motif). Over residues Lys290 to Glu300 the composition is skewed to polar residues. The segment at Lys290 to Glu314 is disordered.

The protein resides in the nucleus. Its function is as follows. Transcription coactivator involved in regulation of the dothistromin biosynthesis gene cluster with aflR. In Dothistroma septosporum (strain NZE10 / CBS 128990) (Red band needle blight fungus), this protein is Dothistromin biosynthesis regulatory protein aflJ.